The following is a 783-amino-acid chain: Mitochondrial intermediate peptidase (783 aa).

A mitochondrion-targeting transit peptide spans 1–33 (MKAGIPLSRCTQRIPLLVARQVSRNITTTTTKF). Position 565 (His565) interacts with Zn(2+). The active site involves Glu566. Positions 569 and 572 each coordinate Zn(2+).

This sequence belongs to the peptidase M3 family. The cofactor is Zn(2+).

It is found in the mitochondrion matrix. The catalysed reaction is Release of an N-terminal octapeptide as second stage of processing of some proteins imported into the mitochondrion.. Cleaves proteins, imported into the mitochondrion, to their mature size. While most mitochondrial precursor proteins are processed to the mature form in one step by mitochondrial processing peptidase (MPP), the sequential cleavage by MIP of an octapeptide after initial processing by MPP is a required step for a subgroup of nuclear-encoded precursor proteins destined for the matrix or the inner membrane. The chain is Mitochondrial intermediate peptidase (OCT1) from Candida albicans (strain SC5314 / ATCC MYA-2876) (Yeast).